The primary structure comprises 227 residues: MANPSCRLLSFGLVPYCQAWQYQRRWVRAKQRDRQREDGLMLLEHPPVYTLGTGSQTKYLKFDPAYPPAELWRTERGGEVTYHCPGQLVGYPILDLNHFQKDLHWYLRQLEEVLIITLEKLDLQGERIAGLTGVWLEGHKVAAIAIKVSGWVTCHGFALNICPDLEGFSHIVPCGIGDRPVGSLNQFLPGLTVEIVQPLVIQAFAEVFPVTWIATGEMPCWLSDDVA.

The BPL/LPL catalytic domain maps to 34–212; the sequence is RQREDGLMLL…AFAEVFPVTW (179 aa). Substrate contacts are provided by residues 76 to 83, 143 to 145, and 156 to 158; these read RGGEVTYH, AIA, and GFA. The Acyl-thioester intermediate role is filled by Cys-174.

Belongs to the LipB family.

Its subcellular location is the cytoplasm. The enzyme catalyses octanoyl-[ACP] + L-lysyl-[protein] = N(6)-octanoyl-L-lysyl-[protein] + holo-[ACP] + H(+). It functions in the pathway protein modification; protein lipoylation via endogenous pathway; protein N(6)-(lipoyl)lysine from octanoyl-[acyl-carrier-protein]: step 1/2. Its function is as follows. Catalyzes the transfer of endogenously produced octanoic acid from octanoyl-acyl-carrier-protein onto the lipoyl domains of lipoate-dependent enzymes. Lipoyl-ACP can also act as a substrate although octanoyl-ACP is likely to be the physiological substrate. The polypeptide is Octanoyltransferase (Synechocystis sp. (strain ATCC 27184 / PCC 6803 / Kazusa)).